A 263-amino-acid chain; its full sequence is MAAASCFHALSTPARSSSSSLQSSSSRLPAPIKPNQLIIRSQKREETATNDAAISRRLALTVLIGAAAVGTKVSPADAAYGEAANVFGKQKSTEFSQYTGPGFKLSVPAKWNPSKEVEYPGQVLRYEDNFDTTSNLAVMVTPTDKKAITDYGAPEEFLSKVDYLLGKQAYFGKTASEGGFEQDAVATANILEVATPTVDGKQYYFLSVLTRTADGDEGGKHQLISATVSDGKLYICKAQAGDKRWFKGARKYVEGSTSFISVA.

The transit peptide at 1-78 (MAAASCFHAL…VGTKVSPADA (78 aa)) directs the protein to the chloroplast. Residues 14–30 (ARSSSSSLQSSSSRLPA) are compositionally biased toward low complexity. The segment at 14 to 34 (ARSSSSSLQSSSSRLPAPIKP) is disordered.

This sequence belongs to the PsbP family.

It localises to the plastid. It is found in the chloroplast thylakoid membrane. Its function is as follows. May be involved in the regulation of photosystem II. The polypeptide is Oxygen-evolving enhancer protein 2, chloroplastic (Helianthus annuus (Common sunflower)).